Reading from the N-terminus, the 161-residue chain is Phosphopantetheine adenylyltransferase (161 aa).

Thr-10 is a substrate binding site. Residues 10 to 11 (TF) and His-18 contribute to the ATP site. 3 residues coordinate substrate: Lys-42, Leu-74, and Arg-88. Residues 89 to 91 (GLR), Glu-99, and 124 to 130 (NAFISSS) contribute to the ATP site.

Belongs to the bacterial CoaD family. Homohexamer. Mg(2+) serves as cofactor.

Its subcellular location is the cytoplasm. The catalysed reaction is (R)-4'-phosphopantetheine + ATP + H(+) = 3'-dephospho-CoA + diphosphate. The protein operates within cofactor biosynthesis; coenzyme A biosynthesis; CoA from (R)-pantothenate: step 4/5. Functionally, reversibly transfers an adenylyl group from ATP to 4'-phosphopantetheine, yielding dephospho-CoA (dPCoA) and pyrophosphate. This chain is Phosphopantetheine adenylyltransferase, found in Wolinella succinogenes (strain ATCC 29543 / DSM 1740 / CCUG 13145 / JCM 31913 / LMG 7466 / NCTC 11488 / FDC 602W) (Vibrio succinogenes).